The sequence spans 112 residues: ATP synthase subunit c (112 aa).

A run of 2 helical transmembrane segments spans residues 36 to 56 (FSVL…AIGM) and 81 to 101 (MFIA…IALI).

The protein belongs to the ATPase C chain family. F-type ATPases have 2 components, F(1) - the catalytic core - and F(0) - the membrane proton channel. F(1) has five subunits: alpha(3), beta(3), gamma(1), delta(1), epsilon(1). F(0) has three main subunits: a(1), b(2) and c(10-14). The alpha and beta chains form an alternating ring which encloses part of the gamma chain. F(1) is attached to F(0) by a central stalk formed by the gamma and epsilon chains, while a peripheral stalk is formed by the delta and b chains.

Its subcellular location is the cell inner membrane. Functionally, f(1)F(0) ATP synthase produces ATP from ADP in the presence of a proton or sodium gradient. F-type ATPases consist of two structural domains, F(1) containing the extramembraneous catalytic core and F(0) containing the membrane proton channel, linked together by a central stalk and a peripheral stalk. During catalysis, ATP synthesis in the catalytic domain of F(1) is coupled via a rotary mechanism of the central stalk subunits to proton translocation. In Campylobacter jejuni subsp. jejuni serotype O:2 (strain ATCC 700819 / NCTC 11168), this protein is ATP synthase subunit c.